Reading from the N-terminus, the 89-residue chain is Neuropeptide S (89 aa).

Positions 1–23 (MIGSLKFNFILFLLISTMHMFWC) are cleaved as a signal peptide. Positions 24–67 (HPISSSKVPGKSDYFVILLNSCPTRMDRRVGLDFLKPILEKTLM) are excised as a propeptide.

The protein resides in the secreted. Its function is as follows. Modulates arousal and anxiety. May play an important anorexigenic role. Binds to its receptor NPSR1 with nanomolar affinity to increase intracellular calcium concentrations. The protein is Neuropeptide S (NPS) of Bos taurus (Bovine).